Reading from the N-terminus, the 86-residue chain is Molybdopterin synthase sulfur carrier subunit (86 aa).

G86 bears the 1-thioglycine; alternate mark. The residue at position 86 (G86) is a Glycyl adenylate; alternate.

The protein belongs to the MoaD family. MOCS2A subfamily. As to quaternary structure, heterotetramer; composed of 2 small (mocs2s) and 2 large (mocs2l) subunits. In terms of processing, C-terminal thiocarboxylation occurs in 2 steps, it is first acyl-adenylated (-COAMP) via the hesA/moeB/thiF part of mocs3, then thiocarboxylated (-COSH) via the rhodanese domain of mocs3.

It localises to the cytoplasm. It functions in the pathway cofactor biosynthesis; molybdopterin biosynthesis. In terms of biological role, acts as a sulfur carrier required for molybdopterin biosynthesis. Component of the molybdopterin synthase complex that catalyzes the conversion of precursor Z into molybdopterin by mediating the incorporation of 2 sulfur atoms into precursor Z to generate a dithiolene group. In the complex, serves as sulfur donor by being thiocarboxylated (-COSH) at its C-terminus by mocs3. After interaction with mocs2l, the sulfur is then transferred to precursor Z to form molybdopterin. This is Molybdopterin synthase sulfur carrier subunit (mocs2s) from Dictyostelium discoideum (Social amoeba).